The chain runs to 198 residues: Cyclotides mra4/mra5 (198 aa).

An N-terminal signal peptide occupies residues 1-22 (MESNKMVVGVLLIAAFALPALA). A propeptide spanning residues 23-79 (LFERDVITHETIEAVLKKSTPNSNTMLQEDAINALTGKTLISQTILEETLLKNGVVG) is cleaved from the precursor. Intrachain disulfides connect C84–C100, C88–C102, and C93–C107. The propeptide occupies 111–163 (SLALPTLEKDVITPEALEAVLKSNGGAIVNTKTIISNAIFEETLLNNANHVLG). 3 disulfide bridges follow: C167/C183, C171/C185, and C176/C190. Positions 194-198 (SLALN) are excised as a propeptide.

It belongs to the cyclotide family. Bracelet subfamily. In terms of processing, these are cyclic peptides. Post-translationally, the mature peptides contain 3 disulfide bonds each.

In terms of biological role, probably participates in a plant defense mechanism. This is Cyclotides mra4/mra5 from Melicytus ramiflorus (Whitey wood).